We begin with the raw amino-acid sequence, 381 residues long: Creatine kinase M-type (381 aa).

Residues 11–98 (KLNFKAEEEY…FDPIIQDRHG (88 aa)) form the Phosphagen kinase N-terminal domain. One can recognise a Phosphagen kinase C-terminal domain in the interval 125 to 367 (YVLSSRVRTG…KLMVEMEKKL (243 aa)). 128 to 132 (SSRVR) lines the ATP pocket. Position 164 is a phosphoserine (S164). T166 carries the phosphothreonine modification. S178 is subject to Phosphoserine. At T180 the chain carries Phosphothreonine. An ATP-binding site is contributed by H191. S199 bears the Phosphoserine mark. 2 residues coordinate ATP: R236 and R292. Phosphothreonine occurs at positions 313 and 322. Residues 320-325 (RGTGGV) and D335 contribute to the ATP site. Residue S372 is modified to Phosphoserine.

This sequence belongs to the ATP:guanido phosphotransferase family. As to quaternary structure, dimer of identical or non-identical chains, which can be either B (brain type) or M (muscle type). With MM being the major form in skeletal muscle and myocardium, MB existing in myocardium, and BB existing in many tissues, especially brain.

It carries out the reaction creatine + ATP = N-phosphocreatine + ADP + H(+). In terms of biological role, reversibly catalyzes the transfer of phosphate between ATP and various phosphogens (e.g. creatine phosphate). Creatine kinase isoenzymes play a central role in energy transduction in tissues with large, fluctuating energy demands, such as skeletal muscle, heart, brain and spermatozoa. The protein is Creatine kinase M-type (CKM) of Sus scrofa (Pig).